The chain runs to 1134 residues: RNA-binding protein NAB6 (1134 aa).

S2 is subject to N-acetylserine. Disordered regions lie at residues 112–133, 151–173, and 464–491; these read RPVSNHNGYNGNSNSNQNNTNN, RNNNSTRNVTHNNNKGCDTRNNS, and SVPSVTAGNNNDSNNNGNNNKSNMSGIT. 2 stretches are compositionally biased toward low complexity: residues 115–133 and 151–164; these read SNHNGYNGNSNSNQNNTNN and RNNNSTRNVTHNNN. S464 and S467 each carry phosphoserine. Residues 471–489 are compositionally biased toward low complexity; that stretch reads GNNNDSNNNGNNNKSNMSG. Residues 653–726 enclose the RRM domain; sequence RTIYIGNINP…NMLRVGWGHY (74 aa). Disordered stretches follow at residues 918–959 and 1043–1092; these read LDAH…FGGL and NYRS…GSFA. Residues 1057 to 1081 show a composition bias toward polar residues; the sequence is STLSYNHSKNNETPMQDIFTNGETA. Positions 1083–1092 are enriched in basic residues; sequence NRKKKRGSFA.

The protein resides in the cytoplasm. Its function is as follows. RNA-binding protein that associates with mRNAs encoding cell wall proteins. The chain is RNA-binding protein NAB6 (NAB6) from Saccharomyces cerevisiae (strain ATCC 204508 / S288c) (Baker's yeast).